Here is a 644-residue protein sequence, read N- to C-terminus: MNVTIEGQVFDVQSGVSCRDALKGALSGKKFKNVVACRCNGTPLDLTATVPADTTTIEPVFADSPEGIELIRHSAAHIMAEAVQKLFPGVKVTIGPAIDSGFYYDFDYERPFSVDDLEAIEAEMQKIVAAAHPFTRTEMTKDEAVALFEGMGEAYKVEIVRDIPADTVSVYRSGDFVDLCRGPHIPDTSFVKAFKLLSVAGAYWRGDEKNRMLSRVYGTAFADPKALKDHLHQIEEAKRRDHRKLGQQLDLFAFHEDVAPGMVYWHPKGMLLRTILEDFLRKEHLKRGYELVQGPQLLRREVWEKSGHYDNYRENMYFTVIDDNAYGVKPMNCVSHMLIYKSHLRSYRDLPRRMFELGVVHRHEKSGVLHGLLRVRQFTQDDAHILCRPDQLEAEIIGVIALVRDLMGLFGFDYRIVISTRPEKSIGSDEDWDRATNALIGAVATAGLSHTINEGDGAFYGPKIDIKVTDAIGREWQLSTIQVDFTLPDRFDLVYIGQDGERHRPVMVHRAILGSLERFIGVLTEHFAGAFPTWIVPVQARLLTVTDAQNDFAMGARDQLVAAGLRVEADTRNEKLGYKVREAQLEKIPYILVVGDKEVEAGGVNVRLRNGENLGLKTLAEVAEMIRADCQEPFKRGGMSYSFS.

A TGS domain is found at M1–F61. The tract at residues D241–P532 is catalytic. Zn(2+) contacts are provided by C333, H384, and H509.

The protein belongs to the class-II aminoacyl-tRNA synthetase family. As to quaternary structure, homodimer. Zn(2+) is required as a cofactor.

The protein resides in the cytoplasm. The catalysed reaction is tRNA(Thr) + L-threonine + ATP = L-threonyl-tRNA(Thr) + AMP + diphosphate + H(+). Functionally, catalyzes the attachment of threonine to tRNA(Thr) in a two-step reaction: L-threonine is first activated by ATP to form Thr-AMP and then transferred to the acceptor end of tRNA(Thr). Also edits incorrectly charged L-seryl-tRNA(Thr). The protein is Threonine--tRNA ligase of Nitratidesulfovibrio vulgaris (strain DSM 19637 / Miyazaki F) (Desulfovibrio vulgaris).